Reading from the N-terminus, the 294-residue chain is Small ribosomal subunit protein uS2 (294 aa).

The disordered stretch occupies residues 254 to 294 (ESSNTEAPVAETAAAEAPVADAAIEAPVAEEAKTTEADDTK). Low complexity predominate over residues 259–282 (EAPVAETAAAEAPVADAAIEAPVA). Residues 283 to 294 (EEAKTTEADDTK) are compositionally biased toward basic and acidic residues.

This sequence belongs to the universal ribosomal protein uS2 family.

The chain is Small ribosomal subunit protein uS2 from Renibacterium salmoninarum (strain ATCC 33209 / DSM 20767 / JCM 11484 / NBRC 15589 / NCIMB 2235).